The chain runs to 229 residues: Flagellar L-ring protein (229 aa).

The signal sequence occupies residues 1–25; the sequence is MKQVRLPSSATVRAACAVAVAALAG. Residue Cys26 is the site of N-palmitoyl cysteine attachment. A lipid anchor (S-diacylglycerol cysteine) is attached at Cys26.

Belongs to the FlgH family. As to quaternary structure, the basal body constitutes a major portion of the flagellar organelle and consists of four rings (L,P,S, and M) mounted on a central rod.

The protein localises to the cell outer membrane. The protein resides in the bacterial flagellum basal body. In terms of biological role, assembles around the rod to form the L-ring and probably protects the motor/basal body from shearing forces during rotation. The polypeptide is Flagellar L-ring protein (Burkholderia orbicola (strain AU 1054)).